The primary structure comprises 248 residues: uncharacterized protein (248 aa).

This is an uncharacterized protein from Sinorhizobium fredii (strain NBRC 101917 / NGR234).